We begin with the raw amino-acid sequence, 354 residues long: DNA polymerase IV (354 aa).

Residues 8–189 (IIHIDMDCFY…LPLQKIPGVG (182 aa)) form the UmuC domain. The Mg(2+) site is built by Asp-12 and Asp-107. Glu-108 is a catalytic residue.

Belongs to the DNA polymerase type-Y family. In terms of assembly, monomer. Requires Mg(2+) as cofactor.

It localises to the cytoplasm. It carries out the reaction DNA(n) + a 2'-deoxyribonucleoside 5'-triphosphate = DNA(n+1) + diphosphate. Functionally, poorly processive, error-prone DNA polymerase involved in untargeted mutagenesis. Copies undamaged DNA at stalled replication forks, which arise in vivo from mismatched or misaligned primer ends. These misaligned primers can be extended by PolIV. Exhibits no 3'-5' exonuclease (proofreading) activity. May be involved in translesional synthesis, in conjunction with the beta clamp from PolIII. The protein is DNA polymerase IV of Vibrio vulnificus (strain CMCP6).